The primary structure comprises 185 residues: Ribose 1,5-bisphosphate phosphokinase PhnN (185 aa).

Residue 10–17 (GPSGSGKD) coordinates ATP.

Belongs to the ribose 1,5-bisphosphokinase family.

The catalysed reaction is alpha-D-ribose 1,5-bisphosphate + ATP = 5-phospho-alpha-D-ribose 1-diphosphate + ADP. It functions in the pathway metabolic intermediate biosynthesis; 5-phospho-alpha-D-ribose 1-diphosphate biosynthesis; 5-phospho-alpha-D-ribose 1-diphosphate from D-ribose 5-phosphate (route II): step 3/3. Its function is as follows. Catalyzes the phosphorylation of ribose 1,5-bisphosphate to 5-phospho-D-ribosyl alpha-1-diphosphate (PRPP). This Pseudomonas paraeruginosa (strain DSM 24068 / PA7) (Pseudomonas aeruginosa (strain PA7)) protein is Ribose 1,5-bisphosphate phosphokinase PhnN.